A 346-amino-acid polypeptide reads, in one-letter code: NADH-ubiquinone oxidoreductase chain 2 (346 aa).

Transmembrane regions (helical) follow at residues 1-21 (MNPH…TITI), 25-45 (HWVL…PLIS), 60-80 (FLTQ…NAWA), 95-115 (CLLL…HFWF), 124-144 (LMTA…LLLM), 149-169 (LNPA…GWMG), 178-195 (ILAF…IILV), 200-219 (LALL…FMAL), 242-262 (ATLM…GFMP), 274-294 (EMTP…FFYL), and 326-346 (AILA…HAIV).

Belongs to the complex I subunit 2 family.

It is found in the mitochondrion inner membrane. It carries out the reaction a ubiquinone + NADH + 5 H(+)(in) = a ubiquinol + NAD(+) + 4 H(+)(out). Its function is as follows. Core subunit of the mitochondrial membrane respiratory chain NADH dehydrogenase (Complex I) that is believed to belong to the minimal assembly required for catalysis. Complex I functions in the transfer of electrons from NADH to the respiratory chain. The immediate electron acceptor for the enzyme is believed to be ubiquinone. The polypeptide is NADH-ubiquinone oxidoreductase chain 2 (MT-ND2) (Sibirionetta formosa (Baikal teal)).